A 418-amino-acid polypeptide reads, in one-letter code: Maltoporin (418 aa).

A signal peptide spans 1 to 26 (MLPMNRNTLGLAVTIATVFVSSTVTA).

This sequence belongs to the porin LamB (TC 1.B.3) family. In terms of assembly, homotrimer formed of three 18-stranded antiparallel beta-barrels, containing three independent channels.

The protein resides in the cell outer membrane. It catalyses the reaction beta-maltose(in) = beta-maltose(out). Its function is as follows. Involved in the transport of maltose and maltodextrins. This Photobacterium profundum (strain SS9) protein is Maltoporin.